Here is a 405-residue protein sequence, read N- to C-terminus: UDP-N-acetylglucosamine--N-acetylmuramyl-(pentapeptide) pyrophosphoryl-undecaprenol N-acetylglucosamine transferase (405 aa).

UDP-N-acetyl-alpha-D-glucosamine is bound by residues 11-13, N127, R168, S191, I248, and Q293; that span reads TGG.

The protein belongs to the glycosyltransferase 28 family. MurG subfamily.

The protein resides in the cell inner membrane. The catalysed reaction is di-trans,octa-cis-undecaprenyl diphospho-N-acetyl-alpha-D-muramoyl-L-alanyl-D-glutamyl-meso-2,6-diaminopimeloyl-D-alanyl-D-alanine + UDP-N-acetyl-alpha-D-glucosamine = di-trans,octa-cis-undecaprenyl diphospho-[N-acetyl-alpha-D-glucosaminyl-(1-&gt;4)]-N-acetyl-alpha-D-muramoyl-L-alanyl-D-glutamyl-meso-2,6-diaminopimeloyl-D-alanyl-D-alanine + UDP + H(+). It functions in the pathway cell wall biogenesis; peptidoglycan biosynthesis. In terms of biological role, cell wall formation. Catalyzes the transfer of a GlcNAc subunit on undecaprenyl-pyrophosphoryl-MurNAc-pentapeptide (lipid intermediate I) to form undecaprenyl-pyrophosphoryl-MurNAc-(pentapeptide)GlcNAc (lipid intermediate II). This Sorangium cellulosum (strain So ce56) (Polyangium cellulosum (strain So ce56)) protein is UDP-N-acetylglucosamine--N-acetylmuramyl-(pentapeptide) pyrophosphoryl-undecaprenol N-acetylglucosamine transferase.